The primary structure comprises 295 residues: Nucleotide-binding protein SSU98_0619 (295 aa).

12–19 (GMSGAGKT) lines the ATP pocket. Residue 62–65 (DMRS) participates in GTP binding.

This sequence belongs to the RapZ-like family.

Displays ATPase and GTPase activities. The sequence is that of Nucleotide-binding protein SSU98_0619 from Streptococcus suis (strain 98HAH33).